Consider the following 645-residue polypeptide: 1-deoxy-D-xylulose-5-phosphate synthase (645 aa).

Thiamine diphosphate-binding positions include histidine 79 and 120–122; that span reads AHS. Aspartate 155 is a binding site for Mg(2+). Thiamine diphosphate is bound by residues 156–157, asparagine 184, tyrosine 293, and glutamate 375; that span reads GA. Asparagine 184 contacts Mg(2+).

Belongs to the transketolase family. DXPS subfamily. In terms of assembly, homodimer. The cofactor is Mg(2+). Requires thiamine diphosphate as cofactor.

It catalyses the reaction D-glyceraldehyde 3-phosphate + pyruvate + H(+) = 1-deoxy-D-xylulose 5-phosphate + CO2. It participates in metabolic intermediate biosynthesis; 1-deoxy-D-xylulose 5-phosphate biosynthesis; 1-deoxy-D-xylulose 5-phosphate from D-glyceraldehyde 3-phosphate and pyruvate: step 1/1. Catalyzes the acyloin condensation reaction between C atoms 2 and 3 of pyruvate and glyceraldehyde 3-phosphate to yield 1-deoxy-D-xylulose-5-phosphate (DXP). In Ruegeria sp. (strain TM1040) (Silicibacter sp.), this protein is 1-deoxy-D-xylulose-5-phosphate synthase.